The chain runs to 92 residues: Small ribosomal subunit protein uS19c (92 aa).

Belongs to the universal ribosomal protein uS19 family.

The protein resides in the plastid. It is found in the chloroplast. Protein S19 forms a complex with S13 that binds strongly to the 16S ribosomal RNA. This is Small ribosomal subunit protein uS19c (rps19) from Chlorella vulgaris (Green alga).